The following is a 549-amino-acid chain: NAC domain-containing protein 53 (549 aa).

An NAC domain is found at 9-159 (LAPGFRFHPT…AFVLCRIFQK (151 aa)). Residues 108-165 (VGMKKTLVYHKGRAPRGERTNWVMHEYRLVDQDLDKTGVHQDAFVLCRIFQKSGSGPK) mediate DNA binding. Residues 395–416 (LEKEETSRSKHVVEEKEKDEAS) show a composition bias toward basic and acidic residues. The interval 395–418 (LEKEETSRSKHVVEEKEKDEASCS) is disordered. Residues 526-546 (LIFMCFWVLLLSVSFKVSILV) form a helical membrane-spanning segment.

As to expression, expressed in roots, rosette leaves, cauline leaves, shoot apex and stems.

Its subcellular location is the endoplasmic reticulum membrane. The protein resides in the nucleus. Its function is as follows. Transcriptional activator activated by proteolytic cleavage through regulated intramembrane proteolysis (RIP). Promotes reactive oxygen species (ROS) production during drought-induced leaf senescence. In response to abscisic acid (ABA)-mediated drought stress signals, binds directly to the promoters of RBOHC and RBOHE genes, encoding ROS biosynthetic enzymes, resulting in ROS accumulation and triggering leaf senescence via programmed cell death (PCD). ROS-induced leaf senescence sustains plant survival under drought conditions. Involved in heat stress response. Modulates PCD through a ROS-mediated positive feedback control under heat stress conditions. This may provide an adaptation strategy for plant survival under extreme heat stress conditions. Acts as a repressor in preventing anther dehiscence during stamen development by suppressing genes that participate in jasmonic acid (JA) biosynthesis, such as DAD1, AOS, AOC3, OPR3 and 4CLL5/OPCL1. This chain is NAC domain-containing protein 53, found in Arabidopsis thaliana (Mouse-ear cress).